The following is a 495-amino-acid chain: MKYRDLREFIALLEQRGELKRIQQSIDPYLEMTEIADRTLRVGGPALLFENPKGYDIPVLCNLFGTPQRVALGMGQEEVGALRDVGKLLAFLKEPDPPKGFRDLVEKLPQFKQILNMPTKRLSKAPCQEQVLQGDDVDLATLPVMHCWPQDVAPLVSWGLTVTRGPCKSRQNLGIYRQQVLGKNKLIMRWLSHRGGALDFQDWCQAHPGERFPVAVALGADPATLLAAVTPVPDSLSEYAFAGLLRGHKSEVVKCLSCDLEVPASAEIVLEGYIEPGETAPEGPYGDHTGYYNEVERFPVFTVTHLTQRDRPIYHSTYTGRPPDEPAVLGLALNEVFVPLLQKQFPEIVDFYLPPEGCSYRMAVVTMKKQYPGHAKRVMMGVWSFLRQFMYTKFVIVCDDDINARDWQDVIWALTTRMDPARDTLLIENTPIDYLDFASPVSGLGSKMGLDATNKWPGETQREWGHPIVMDEAVRARVDTLWNELDIFANDKDAQ.

Asn-172 serves as a coordination point for Mn(2+). Residues Ile-175–Arg-177, Arg-189–Leu-191, and Arg-194–Gly-195 each bind prenylated FMN. Glu-238 is a Mn(2+) binding site. The active-site Proton donor is Asp-287.

Belongs to the UbiD family. In terms of assembly, homohexamer. It depends on prenylated FMN as a cofactor. Requires Mn(2+) as cofactor.

The protein localises to the cell membrane. The catalysed reaction is a 4-hydroxy-3-(all-trans-polyprenyl)benzoate + H(+) = a 2-(all-trans-polyprenyl)phenol + CO2. Its pathway is cofactor biosynthesis; ubiquinone biosynthesis. Functionally, catalyzes the decarboxylation of 3-octaprenyl-4-hydroxy benzoate to 2-octaprenylphenol, an intermediate step in ubiquinone biosynthesis. In Edwardsiella ictaluri (strain 93-146), this protein is 3-octaprenyl-4-hydroxybenzoate carboxy-lyase.